The sequence spans 267 residues: Putative B3 domain-containing protein LOC_Os07g12820 (267 aa).

The TF-B3 DNA-binding region spans 4 to 99; that stretch reads PTFSMVKIKT…RLNVIIFNKE (96 aa).

It localises to the nucleus. This is Putative B3 domain-containing protein LOC_Os07g12820 from Oryza sativa subsp. japonica (Rice).